The chain runs to 502 residues: Neuronal acetylcholine receptor subunit alpha-7 (502 aa).

The first 22 residues, 1 to 22 (MRCSPGGVWLALAASLLHVSLQ), serve as a signal peptide directing secretion. Topologically, residues 23–233 (GEFQRKLYKE…VTMRRRTLYY (211 aa)) are extracellular. Residues R42 and V44 each coordinate Ca(2+). N-linked (GlcNAc...) asparagine glycans are attached at residues N46, N90, and N133. C150 and C164 form a disulfide bridge. 2 residues coordinate Ca(2+): S172 and Y210. A disulfide bond links C212 and C213. The next 3 membrane-spanning stretches (helical) occupy residues 234–254 (GLNL…VFLL), 259–279 (GEKI…MLLV), and 292–315 (LIAQ…VIVL). Positions 260–267 (EKISLGIT) are essential for TMEM35A/NACHO-mediated proper subunit assembly and trafficking to cell membrane. Over 316–466 (QYHHHDPDGG…CSEWKFAACV (151 aa)) the chain is Cytoplasmic. A helical transmembrane segment spans residues 467–489 (VDRLCLMAFSVFTIICTIGILMS).

This sequence belongs to the ligand-gated ion channel (TC 1.A.9) family. Acetylcholine receptor (TC 1.A.9.1) subfamily. Alpha-7/CHRNA7 sub-subfamily. In terms of assembly, homopentamer. Can also form heteropentamers with CHRNB2, mainly found in basal forebrain cholinergic neurons. Interacts with RIC3; which is required for proper folding and assembly. Interacts with LYPD6. Interacts with CANX. Post-translationally, glycosylations at Asn-46, Asn-90 and Asn-133 are essential for TMEM35A/NACHO-mediated proper subunit assembly and trafficking to the cell membrane. Expressed in neuronal cells. Expressed in macrophages (at protein level).

Its subcellular location is the postsynaptic cell membrane. The protein localises to the cell membrane. It catalyses the reaction Ca(2+)(in) = Ca(2+)(out). The enzyme catalyses K(+)(in) = K(+)(out). It carries out the reaction Na(+)(in) = Na(+)(out). The catalysed reaction is choline(out) = choline(in). It catalyses the reaction NH4(+)(in) = NH4(+)(out). The enzyme catalyses L-arginine(in) = L-arginine(out). It carries out the reaction guanidine(out) = guanidine(in). Its activity is regulated as follows. Activated by a myriad of ligands such as acetylcholine, cytisine, nicotine, choline and epibatidine. Oligomeric amyloid-beta protein 42 activates specifially CHRNA7:CHRNB2 nAchRs. Activity is modulated by positive allosteric modulators (PAMs), such as flavonoids, with a wide range of chemical diversity, pharmacological sensitivity and efficacy. AChR activity is inhibited by the antagonists alpha-conotoxons RgIA, ImI and ImII, small disulfide-constrained peptides from cone snails. Alpha-conotoxin PnIC selectively inhibits CHRNA7:CHRNB2 over CHRNA7 homopentamer. Its function is as follows. Component of neuronal acetylcholine receptors (nAChRs) that function as pentameric, ligand-gated cation channels with high calcium permeability among other activities. nAChRs are excitatory neurotrasnmitter receptors formed by a collection of nAChR subunits known to mediate synaptic transmission in the nervous system and the neuromuscular junction. Each nAchR subunit confers differential attributes to channel properties, including activation, deactivation and desensitization kinetics, pH sensitivity, cation permeability, and binding to allosteric modulators. CHRNA7 forms homopentameric neuronal acetylcholine receptors abundantly expressed in the central nervous system, characterized by fast desensitization and high calcium permeability. Also forms heteropentamers with CHRNB2, mainly expressed in basal forebrain cholinergic neurons. Involved in the modulation of calcium-dependent signaling pathways and influences the release of neurotransmitters, including dopamine, glutamate and GABA. Also expressed in non-neuronal cells such as immune cells like lymphocytes, monocytes and macrophages. In T cells, activation induces metabotropic signaling that results in an increase of intracellular Ca2+ concentrations, independent of ionotropic receptor functions. In macrophages, required for acetylcholine-mediated inhibition of TNF and other inflammatory cytokine release. Once activated by acetylcholine, nicotine or other agonists, selectively inhibits production of pro-inflammatory cytokines while leaving anti-inflammatory cytokines undisturbed. Stimulates the cholinergic anti-inflammatory pathway, controlling inflammation by inhibiting NFKB nuclear translocation and activating the JAK2-STAT3 pathway, independently of ion channel activity. Also expressed in the urothelium where it modulates reflex bladder activity by increasing intracellular calcium through internal stores and decreasing basal ATP release. This chain is Neuronal acetylcholine receptor subunit alpha-7, found in Homo sapiens (Human).